Here is a 454-residue protein sequence, read N- to C-terminus: Bifunctional protein GlmU (454 aa).

A pyrophosphorylase region spans residues 1-227; sequence MTQLSVVILA…FMEVEGANNR (227 aa). Residues 9 to 12, Lys23, Gln74, 79 to 80, 101 to 103, Gly138, Glu152, Asn167, and Asn225 contribute to the UDP-N-acetyl-alpha-D-glucosamine site; these read LAAG, GT, and YGD. Residue Asp103 coordinates Mg(2+). Asn225 is a binding site for Mg(2+). The segment at 228–248 is linker; that stretch reads LQLAALERFYQKTQAEKLLLA. The N-acetyltransferase stretch occupies residues 249–454; that stretch reads GVRLIDPARF…QGWQRPTKKK (206 aa). UDP-N-acetyl-alpha-D-glucosamine is bound by residues Arg331 and Lys349. Catalysis depends on His361, which acts as the Proton acceptor. UDP-N-acetyl-alpha-D-glucosamine contacts are provided by Tyr364 and Asn375. Acetyl-CoA contacts are provided by residues Ala378, 384–385, Ser403, Ala421, and Arg438; that span reads NY.

This sequence in the N-terminal section; belongs to the N-acetylglucosamine-1-phosphate uridyltransferase family. It in the C-terminal section; belongs to the transferase hexapeptide repeat family. In terms of assembly, homotrimer. Mg(2+) serves as cofactor.

It is found in the cytoplasm. It catalyses the reaction alpha-D-glucosamine 1-phosphate + acetyl-CoA = N-acetyl-alpha-D-glucosamine 1-phosphate + CoA + H(+). The enzyme catalyses N-acetyl-alpha-D-glucosamine 1-phosphate + UTP + H(+) = UDP-N-acetyl-alpha-D-glucosamine + diphosphate. It participates in nucleotide-sugar biosynthesis; UDP-N-acetyl-alpha-D-glucosamine biosynthesis; N-acetyl-alpha-D-glucosamine 1-phosphate from alpha-D-glucosamine 6-phosphate (route II): step 2/2. Its pathway is nucleotide-sugar biosynthesis; UDP-N-acetyl-alpha-D-glucosamine biosynthesis; UDP-N-acetyl-alpha-D-glucosamine from N-acetyl-alpha-D-glucosamine 1-phosphate: step 1/1. The protein operates within bacterial outer membrane biogenesis; LPS lipid A biosynthesis. Functionally, catalyzes the last two sequential reactions in the de novo biosynthetic pathway for UDP-N-acetylglucosamine (UDP-GlcNAc). The C-terminal domain catalyzes the transfer of acetyl group from acetyl coenzyme A to glucosamine-1-phosphate (GlcN-1-P) to produce N-acetylglucosamine-1-phosphate (GlcNAc-1-P), which is converted into UDP-GlcNAc by the transfer of uridine 5-monophosphate (from uridine 5-triphosphate), a reaction catalyzed by the N-terminal domain. The chain is Bifunctional protein GlmU from Actinobacillus pleuropneumoniae serotype 3 (strain JL03).